Reading from the N-terminus, the 89-residue chain is Small ribosomal subunit protein uS19 (89 aa).

This sequence belongs to the universal ribosomal protein uS19 family.

Its function is as follows. Protein S19 forms a complex with S13 that binds strongly to the 16S ribosomal RNA. This chain is Small ribosomal subunit protein uS19, found in Stenotrophomonas maltophilia (strain K279a).